The primary structure comprises 282 residues: Gap junction Cx32.7 protein (282 aa).

Topologically, residues 2–13 (GEWDLLGRLLDK) are cytoplasmic. Residues 14-36 (VQSHSTVIGKVWLTVLFVFRILV) traverse the membrane as a helical segment. Topologically, residues 37–76 (LRTGADRVWGDEQSDFVCNTQQPGCENVCYDLAFPISHVR) are extracellular. Residues 77–99 (FWFLQIIAVATPKLLYLGHVLHV) form a helical membrane-spanning segment. The Cytoplasmic portion of the chain corresponds to 100–148 (IHAEKKMKERMKKQAELDDQTNLFLRKAYKVPKYTKSSGKISIRGRLLR). A helical membrane pass occupies residues 149–171 (SYVYHLVAKIILEVLFIVGQYFL). Topologically, residues 172 to 203 (YGFTLDTRYVCTRFPCPHKVDCFLSRPTEKSV) are extracellular. Residues 204–226 (IIWFMLVAAFVSLFLSLVELFYL) traverse the membrane as a helical segment. Topologically, residues 227-282 (CVKAAKECMARRQDYTVTPVTPPLLARKSFKSHKEVFQNCVNEPASPENNMEEVHI) are cytoplasmic.

This sequence belongs to the connexin family. Alpha-type (group II) subfamily. A connexon is composed of a hexamer of connexins. As to expression, expressed equally in incompetent and competent ovaries.

It localises to the cell membrane. The protein resides in the cell junction. The protein localises to the gap junction. Its function is as follows. One gap junction consists of a cluster of closely packed pairs of transmembrane channels, the connexons, through which materials of low MW diffuse from one cell to a neighboring cell. The protein is Gap junction Cx32.7 protein of Micropogonias undulatus (Atlantic croaker).